The primary structure comprises 339 residues: Tetraacyldisaccharide 4'-kinase (339 aa).

58-65 (NVGGVGKT) contacts ATP.

Belongs to the LpxK family.

The catalysed reaction is a lipid A disaccharide + ATP = a lipid IVA + ADP + H(+). The protein operates within glycolipid biosynthesis; lipid IV(A) biosynthesis; lipid IV(A) from (3R)-3-hydroxytetradecanoyl-[acyl-carrier-protein] and UDP-N-acetyl-alpha-D-glucosamine: step 6/6. Functionally, transfers the gamma-phosphate of ATP to the 4'-position of a tetraacyldisaccharide 1-phosphate intermediate (termed DS-1-P) to form tetraacyldisaccharide 1,4'-bis-phosphate (lipid IVA). The chain is Tetraacyldisaccharide 4'-kinase from Chromobacterium violaceum (strain ATCC 12472 / DSM 30191 / JCM 1249 / CCUG 213 / NBRC 12614 / NCIMB 9131 / NCTC 9757 / MK).